A 46-amino-acid chain; its full sequence is MRTNFEKFTKRDSVVNEQGEQWQERRDRMKKRHKQQRGNSQKREWN.

Positions 1–14 (MRTNFEKFTKRDSV) are enriched in basic and acidic residues. The interval 1–46 (MRTNFEKFTKRDSVVNEQGEQWQERRDRMKKRHKQQRGNSQKREWN) is disordered.

In terms of biological role, the function of this early gene protein is unknown. The chain is Gene 1.1 protein (1.1) from Escherichia coli (Bacteriophage T3).